The chain runs to 792 residues: Probable exo-1,4-beta-xylosidase xlnD (792 aa).

An N-terminal signal peptide occupies residues 1–20; the sequence is MSVAKSIAAVLVALLPGALA. 5 N-linked (GlcNAc...) asparagine glycosylation sites follow: Asn-23, Asn-87, Asn-118, Asn-142, and Asn-246. Residue Asp-310 is part of the active site. Residues Asn-326, Asn-385, Asn-404, Asn-440, Asn-477, Asn-518, Asn-679, and Asn-701 are each glycosylated (N-linked (GlcNAc...) asparagine).

Belongs to the glycosyl hydrolase 3 family.

It is found in the secreted. The catalysed reaction is Hydrolysis of (1-&gt;4)-beta-D-xylans, to remove successive D-xylose residues from the non-reducing termini.. Its pathway is glycan degradation; xylan degradation. In terms of biological role, xylan 1,4-beta-xylosidase involved in the hydrolysis of xylan, a major structural heterogeneous polysaccharide found in plant biomass representing the second most abundant polysaccharide in the biosphere, after cellulose. The protein is Probable exo-1,4-beta-xylosidase xlnD (xlnD) of Aspergillus fumigatus (strain ATCC MYA-4609 / CBS 101355 / FGSC A1100 / Af293) (Neosartorya fumigata).